The chain runs to 511 residues: Histidine ammonia-lyase (511 aa).

The 5-imidazolinone (Ala-Gly) cross-link spans 142–144; sequence ASG. Ser143 carries the post-translational modification 2,3-didehydroalanine (Ser).

Belongs to the PAL/histidase family. In terms of processing, contains an active site 4-methylidene-imidazol-5-one (MIO), which is formed autocatalytically by cyclization and dehydration of residues Ala-Ser-Gly.

The protein resides in the cytoplasm. It catalyses the reaction L-histidine = trans-urocanate + NH4(+). Its pathway is amino-acid degradation; L-histidine degradation into L-glutamate; N-formimidoyl-L-glutamate from L-histidine: step 1/3. This chain is Histidine ammonia-lyase, found in Brucella ovis (strain ATCC 25840 / 63/290 / NCTC 10512).